The sequence spans 312 residues: Glyoxylate/hydroxypyruvate reductase A (312 aa).

Arg227 is an active-site residue. The active-site Proton donor is His275.

This sequence belongs to the D-isomer specific 2-hydroxyacid dehydrogenase family. GhrA subfamily.

The protein resides in the cytoplasm. The catalysed reaction is glycolate + NADP(+) = glyoxylate + NADPH + H(+). It carries out the reaction (R)-glycerate + NAD(+) = 3-hydroxypyruvate + NADH + H(+). It catalyses the reaction (R)-glycerate + NADP(+) = 3-hydroxypyruvate + NADPH + H(+). Functionally, catalyzes the NADPH-dependent reduction of glyoxylate and hydroxypyruvate into glycolate and glycerate, respectively. The polypeptide is Glyoxylate/hydroxypyruvate reductase A (Citrobacter koseri (strain ATCC BAA-895 / CDC 4225-83 / SGSC4696)).